Here is a 220-residue protein sequence, read N- to C-terminus: Uracil-DNA glycosylase (220 aa).

The active-site Proton acceptor is the Asp-60.

This sequence belongs to the uracil-DNA glycosylase (UDG) superfamily. UNG family.

Its subcellular location is the cytoplasm. It catalyses the reaction Hydrolyzes single-stranded DNA or mismatched double-stranded DNA and polynucleotides, releasing free uracil.. Functionally, excises uracil residues from the DNA which can arise as a result of misincorporation of dUMP residues by DNA polymerase or due to deamination of cytosine. The protein is Uracil-DNA glycosylase of Francisella tularensis subsp. holarctica (strain FTNF002-00 / FTA).